Here is a 220-residue protein sequence, read N- to C-terminus: NADH-quinone oxidoreductase subunit I (220 aa).

4Fe-4S ferredoxin-type domains lie at 71 to 102 (LQRL…IITH) and 112 to 141 (DSYT…MGNR). 8 residues coordinate [4Fe-4S] cluster: Cys-82, Cys-85, Cys-88, Cys-92, Cys-121, Cys-124, Cys-127, and Cys-131. Positions 189-220 (ATPLDYVQEPSKEESKKETPTSPEANKGDENV) are disordered. The segment covering 198 to 207 (PSKEESKKET) has biased composition (basic and acidic residues).

It belongs to the complex I 23 kDa subunit family. NDH-1 is composed of 14 different subunits. Subunits NuoA, H, J, K, L, M, N constitute the membrane sector of the complex. Requires [4Fe-4S] cluster as cofactor.

The protein localises to the cell inner membrane. The catalysed reaction is a quinone + NADH + 5 H(+)(in) = a quinol + NAD(+) + 4 H(+)(out). In terms of biological role, NDH-1 shuttles electrons from NADH, via FMN and iron-sulfur (Fe-S) centers, to quinones in the respiratory chain. The immediate electron acceptor for the enzyme in this species is believed to be ubiquinone. Couples the redox reaction to proton translocation (for every two electrons transferred, four hydrogen ions are translocated across the cytoplasmic membrane), and thus conserves the redox energy in a proton gradient. The polypeptide is NADH-quinone oxidoreductase subunit I (Helicobacter acinonychis (strain Sheeba)).